The sequence spans 201 residues: Alpha-1-acid glycoprotein 2 (201 aa).

A signal peptide spans 1–18 (MALSWVLTVLSLLPLLEA). A Pyrrolidone carboxylic acid modification is found at Gln19. 2 disulfide bridges follow: Cys23/Cys165 and Cys90/Cys183. A glycan (N-linked (GlcNAc...) (complex) asparagine) is linked at Asn33. 4 N-linked (GlcNAc...) asparagine glycosylation sites follow: Asn56, Asn72, Asn93, and Asn103.

Belongs to the calycin superfamily. Lipocalin family. Post-translationally, N-glycosylated. N-glycan heterogeneity at Asn-33: Hex5HexNAc4 (minor), Hex6HexNAc5 (major) and dHex1Hex6HexNAc5 (minor). Expressed by the liver and secreted in plasma.

Its subcellular location is the secreted. Functionally, functions as a transport protein in the blood stream. Binds various hydrophobic ligands in the interior of its beta-barrel domain. Also binds synthetic drugs and influences their distribution and availability. Appears to function in modulating the activity of the immune system during the acute-phase reaction. The protein is Alpha-1-acid glycoprotein 2 (ORM2) of Homo sapiens (Human).